Here is a 346-residue protein sequence, read N- to C-terminus: Uroporphyrinogen decarboxylase (346 aa).

Substrate contacts are provided by residues 21 to 25, F40, D71, Y146, S201, and H316; that span reads RQAGR.

It belongs to the uroporphyrinogen decarboxylase family. As to quaternary structure, homodimer.

The protein resides in the cytoplasm. It carries out the reaction uroporphyrinogen III + 4 H(+) = coproporphyrinogen III + 4 CO2. It participates in porphyrin-containing compound metabolism; protoporphyrin-IX biosynthesis; coproporphyrinogen-III from 5-aminolevulinate: step 4/4. Catalyzes the decarboxylation of four acetate groups of uroporphyrinogen-III to yield coproporphyrinogen-III. The sequence is that of Uroporphyrinogen decarboxylase from Rickettsia conorii (strain ATCC VR-613 / Malish 7).